Consider the following 36-residue polypeptide: MSASYLPSILVPLVGLVFPAVTMASLFLYIEQDEIV.

Residues 9-29 form a helical membrane-spanning segment; sequence ILVPLVGLVFPAVTMASLFLY.

This sequence belongs to the PsaI family.

It is found in the plastid. Its subcellular location is the chloroplast thylakoid membrane. In terms of biological role, may help in the organization of the PsaL subunit. The protein is Photosystem I reaction center subunit VIII of Staurastrum punctulatum (Green alga).